The following is a 72-amino-acid chain: Large ribosomal subunit protein uL29 (72 aa).

It belongs to the universal ribosomal protein uL29 family.

The polypeptide is Large ribosomal subunit protein uL29 (Chlamydia abortus (strain DSM 27085 / S26/3) (Chlamydophila abortus)).